Consider the following 459-residue polypeptide: ATP-dependent protease ATPase subunit HslU (459 aa).

ATP contacts are provided by residues Val-18, 60–65, Asp-272, Glu-337, and Arg-409; that span reads GVGKTE.

It belongs to the ClpX chaperone family. HslU subfamily. As to quaternary structure, a double ring-shaped homohexamer of HslV is capped on each side by a ring-shaped HslU homohexamer. The assembly of the HslU/HslV complex is dependent on binding of ATP.

The protein localises to the cytoplasm. Its function is as follows. ATPase subunit of a proteasome-like degradation complex; this subunit has chaperone activity. The binding of ATP and its subsequent hydrolysis by HslU are essential for unfolding of protein substrates subsequently hydrolyzed by HslV. HslU recognizes the N-terminal part of its protein substrates and unfolds these before they are guided to HslV for hydrolysis. This chain is ATP-dependent protease ATPase subunit HslU, found in Thermoanaerobacter sp. (strain X514).